A 447-amino-acid polypeptide reads, in one-letter code: Ribosomal protein uS12 methylthiotransferase RimO (447 aa).

The MTTase N-terminal domain occupies 4 to 114 (PKVGFVSLGC…VMEAVHEYVP (111 aa)). Cys-13, Cys-49, Cys-78, Cys-147, Cys-151, and Cys-154 together coordinate [4Fe-4S] cluster. The Radical SAM core domain occupies 133 to 370 (LTPKHYAYLK…MQVQQQISAA (238 aa)). Residues 373-443 (QKRIGQTMTV…EYDLFAKLIK (71 aa)) enclose the TRAM domain.

It belongs to the methylthiotransferase family. RimO subfamily. Requires [4Fe-4S] cluster as cofactor.

Its subcellular location is the cytoplasm. The enzyme catalyses L-aspartate(89)-[ribosomal protein uS12]-hydrogen + (sulfur carrier)-SH + AH2 + 2 S-adenosyl-L-methionine = 3-methylsulfanyl-L-aspartate(89)-[ribosomal protein uS12]-hydrogen + (sulfur carrier)-H + 5'-deoxyadenosine + L-methionine + A + S-adenosyl-L-homocysteine + 2 H(+). Its function is as follows. Catalyzes the methylthiolation of an aspartic acid residue of ribosomal protein uS12. This Acinetobacter baumannii (strain SDF) protein is Ribosomal protein uS12 methylthiotransferase RimO.